A 220-amino-acid chain; its full sequence is Glutathione S-transferase U26 (220 aa).

Positions 4–83 (DQVILLDYWP…YIDEVWSDAS (80 aa)) constitute a GST N-terminal domain. Residues 14-15 (SM), 40-41 (VK), 54-55 (KI), and 67-68 (ES) contribute to the glutathione site. A GST C-terminal domain is found at 89–210 (DPYQKSRARF…ADSDRIIEYV (122 aa)).

It belongs to the GST superfamily. Tau family.

It is found in the cytoplasm. The protein resides in the cytosol. It catalyses the reaction RX + glutathione = an S-substituted glutathione + a halide anion + H(+). In terms of biological role, in vitro, possesses glutathione S-transferase activity toward 1-chloro-2,4-dinitrobenzene (CDNB). May be involved in the conjugation of reduced glutathione to a wide number of exogenous and endogenous hydrophobic electrophiles and have a detoxification role against certain herbicides. The chain is Glutathione S-transferase U26 (GSTU26) from Arabidopsis thaliana (Mouse-ear cress).